The sequence spans 113 residues: Dolichyl-diphosphooligosaccharide--protein glycosyltransferase subunit dad-1 (113 aa).

Residues 1 to 32 (MAAQVVPVLSKLFDDYQKTTSSKLKIIDAYMT) are Cytoplasmic-facing. Residues 33–53 (YILFTGIFQFIYCLLVGTFPF) traverse the membrane as a helical segment. Residues 54–55 (NS) are Lumenal-facing. Residues 56–78 (FLSGFISTVTSFVLASCLRMQVN) traverse the membrane as a helical segment. Over 79-92 (QENRSEFTAVSTER) the chain is Cytoplasmic. The chain crosses the membrane as a helical span at residues 93–113 (AFADFIFANLILHLVVVNFLG).

It belongs to the DAD/OST2 family. Component of the oligosaccharyltransferase (OST) complex.

It is found in the endoplasmic reticulum membrane. It participates in protein modification; protein glycosylation. Functionally, subunit of the oligosaccharyl transferase (OST) complex that catalyzes the initial transfer of a defined glycan (Glc(3)Man(9)GlcNAc(2) in eukaryotes) from the lipid carrier dolichol-pyrophosphate to an asparagine residue within an Asn-X-Ser/Thr consensus motif in nascent polypeptide chains, the first step in protein N-glycosylation. N-glycosylation occurs cotranslationally and the complex associates with the Sec61 complex at the channel-forming translocon complex that mediates protein translocation across the endoplasmic reticulum (ER). All subunits are required for a maximal enzyme activity. Possesses cell death-inhibiting activity. Suppresses some programmed cell death in C.elegans. The protein is Dolichyl-diphosphooligosaccharide--protein glycosyltransferase subunit dad-1 of Caenorhabditis elegans.